A 186-amino-acid polypeptide reads, in one-letter code: Large ribosomal subunit protein uL6 (186 aa).

The protein belongs to the universal ribosomal protein uL6 family. In terms of assembly, part of the 50S ribosomal subunit.

Functionally, this protein binds to the 23S rRNA, and is important in its secondary structure. It is located near the subunit interface in the base of the L7/L12 stalk, and near the tRNA binding site of the peptidyltransferase center. The protein is Large ribosomal subunit protein uL6 of Ignicoccus hospitalis (strain KIN4/I / DSM 18386 / JCM 14125).